The chain runs to 197 residues: MKLIVGMTGATGAPLGVALLQALREMPNVETHLVMSKWAKTTIELETPYSARDVAALADFSHNPADQAATISSGSFRTDGMIVIPCSMKTLAGIRAGYADGLVGRAADVVLKEGRKLVLVPREMPLSTIHLENMLALSRMGVAMVPPMPAFYNHPETVDDIVHHVVARVLDQFGLEHPYARRWQGLPQARNFSQENE.

Residues glycine 9 to threonine 11, serine 36, serine 87 to threonine 90, and arginine 122 each bind FMN.

The protein belongs to the UbiX/PAD1 family. YclB subfamily. Homododecamer.

The enzyme catalyses dimethylallyl phosphate + FMNH2 = prenylated FMNH2 + phosphate. Functionally, involved in the non-oxidative decarboxylation and detoxification of phenolic derivatives under both aerobic and anaerobic conditions. Flavin prenyltransferase that catalyzes the synthesis of the prenylated FMN cofactor (prenyl-FMN) for phenolic acid decarboxylase. This is Probable UbiX-like flavin prenyltransferase from Escherichia coli O157:H7.